Here is a 344-residue protein sequence, read N- to C-terminus: MPESPPLPKRSPLMTSSTTRPASDYPPGGDAFRHRHLTGIAQLTPWEISYILDAAEEWVELNRSGAAKHDDRLAGLTIINAFFENSTRTLLSFEIAGKRLGADVVNMHAAQSSVKKGETLIDTAMTLNAMRADAIVIRHASSGAVQLIADKVDCPVLNAGDGRHEHPTQALLDALTIRRRLGRVEGLAIAICGDVLHSRVARSNILALTLLGNEVRVVAPATLTPPAMERMHVRCFTDMDEGLKGADVVMMLRLQNERMDGAHLPSAREYHALYGLTPQRLEKAKPDAIVMHPGPMNRGVEIDSSVADDHARSTITEQVEMGVAVRMACLDILTRRQRGVPGWN.

Positions 1-30 (MPESPPLPKRSPLMTSSTTRPASDYPPGGD) are disordered. The carbamoyl phosphate site is built by arginine 88 and threonine 89. Lysine 116 is an L-aspartate binding site. Arginine 138, histidine 166, and glutamine 169 together coordinate carbamoyl phosphate. L-aspartate contacts are provided by arginine 199 and arginine 253. Residues glycine 294 and proline 295 each contribute to the carbamoyl phosphate site.

The protein belongs to the aspartate/ornithine carbamoyltransferase superfamily. ATCase family. As to quaternary structure, heterododecamer (2C3:3R2) of six catalytic PyrB chains organized as two trimers (C3), and six regulatory PyrI chains organized as three dimers (R2).

It carries out the reaction carbamoyl phosphate + L-aspartate = N-carbamoyl-L-aspartate + phosphate + H(+). It participates in pyrimidine metabolism; UMP biosynthesis via de novo pathway; (S)-dihydroorotate from bicarbonate: step 2/3. Its function is as follows. Catalyzes the condensation of carbamoyl phosphate and aspartate to form carbamoyl aspartate and inorganic phosphate, the committed step in the de novo pyrimidine nucleotide biosynthesis pathway. The polypeptide is Aspartate carbamoyltransferase catalytic subunit (Sphingopyxis alaskensis (strain DSM 13593 / LMG 18877 / RB2256) (Sphingomonas alaskensis)).